The sequence spans 735 residues: MEDAGGGEETPAPEAPHPPQLAPPEEQGLLFQEETIDLGGDEFGSEENETASEGSSPLADKLNEHMMESVLISDSPNSEGDAGDLGRVRDEAEPGGEGDPGPEPAGTPSPSGEADGDCAPEDAAPSSGGAPRQDAAREVPGSEAARPEQEPPVAEPVPVCTIFSQRAPPASGDGFEPQMVKSPSFGGASEASARTPPQVVQPSPSLSTFFGDTAASHSLASDFFDSFTTSAFISVSNPGAGSPAPASPPPLAVPGTEGRPEPVAMRGPQAAAPPASPEPFAHIQAVFAGSDDPFATALSMSEMDRRNDAWLPGEATRGVLRAVATQQRGAVFVDKENLTMPGLRFDNIQGDAVKDLMLRFLGEKAAAKRQVLNADSVEQSFVGLKQLISCRNWRAAVDLCGRLLTAHGQGYGKSGLLTSHTTDSLQLWFVRLALLVKLGLFQNAEMEFEPFGNLDQPDLYYEYYPHVYPGRRGSMVPFSMRILHAELQQYLGNPQESLDRLHKVKTVCSKILANLEQGLAEDGGMSSVTQEGRQASIRLWRSRLGRVMYSMANCLLLMKDYVLAVEAYHSVIKYYPEQEPQLLSGIGRISLQIGDIKTAEKYFQDVEKVTQKLDGLQGKIMVLMNSAFLHLGQNNFAEAHRFFTEILRMDPRNAVANNNAAVCLLYLGKLKDSLRQLEAMVQQDPRHYLHESVLFNLTTMYELESSRSMQKKQALLEAVAGKEGDSFNTQCLKLA.

Disordered regions lie at residues 1-204 (MEDA…QPSP) and 237-276 (NPGA…PPAS). Residues 13–22 (PEAPHPPQLA) show a composition bias toward pro residues. The segment covering 34–50 (ETIDLGGDEFGSEENET) has biased composition (acidic residues). 2 positions are modified to phosphoserine: S109 and S184. 4 TPR repeats span residues 545 to 578 (GRVM…YPEQ), 580 to 613 (PQLL…TQKL), 620 to 653 (IMVL…DPRN), and 654 to 687 (AVAN…DPRH).

Component of the multisubunit TRAPP (transport protein particle) complex, which includes at least TRAPPC2, TRAPPC2L, TRAPPC3, TRAPPC3L, TRAPPC4, TRAPPC5, TRAPPC8, TRAPPC9, TRAPPC10, TRAPPC11 and TRAPPC12. Interacts with CENPE. Phosphorylated as the cells enter mitosis but is dephosphorylated at or before the onset of anaphase. The phosphorylated form recruits CENPE to kinetochores more efficiently than the non-phosphorylated form.

The protein localises to the endoplasmic reticulum-Golgi intermediate compartment. It localises to the nucleus. In terms of biological role, component of the TRAPP complex, which is involved in endoplasmic reticulum to Golgi apparatus trafficking at a very early stage. Also plays a role in chromosome congression, kinetochore assembly and stability and controls the recruitment of CENPE to the kinetochores. The chain is Trafficking protein particle complex subunit 12 from Homo sapiens (Human).